The primary structure comprises 111 residues: Protein GLUTAMINE DUMPER 6 (111 aa).

The Extracellular portion of the chain corresponds to 1–16; that stretch reads MRPTPKVEIWKSPVPY. The helical transmembrane segment at 17 to 37 threads the bilayer; sequence LFGGLFLLVLLIALALLSLVC. Residues 38 to 111 are Cytoplasmic-facing; it reads THQKPSSSSN…NCDNVTVIST (74 aa). Polar residues predominate over residues 40–49; the sequence is QKPSSSSNNN. Residues 40–63 form a disordered region; that stretch reads QKPSSSSNNNHMDEEDDVGDKDAK. The VIMAG; degenerate signature appears at 75–79; the sequence is VILAG.

It belongs to the GLUTAMINE DUMPER 1 (TC 9.B.60) family. Expressed in the vascular tissues.

The protein resides in the membrane. Probable subunit of an amino acid transporter involved in the regulation of the amino acid metabolism. Stimulates amino acid export by activating nonselective amino acid facilitators. The chain is Protein GLUTAMINE DUMPER 6 (GDU6) from Arabidopsis thaliana (Mouse-ear cress).